Reading from the N-terminus, the 263-residue chain is Proteasome subunit alpha type-1 (263 aa).

Met1 carries the N-acetylmethionine modification. The residue at position 110 (Ser110) is a Phosphoserine; alternate. Residue Ser110 is glycosylated (O-linked (GlcNAc) serine; alternate). Lys115 is covalently cross-linked (Glycyl lysine isopeptide (Lys-Gly) (interchain with G-Cter in ubiquitin)). Ser177 is modified (phosphoserine). Lys208 participates in a covalent cross-link: Glycyl lysine isopeptide (Lys-Gly) (interchain with G-Cter in ubiquitin). The segment at 232–263 (FLDGLEERPQRKAQPSQAADEPAEKADEPMEH) is disordered. A compositionally biased stretch (basic and acidic residues) spans 253-263 (PAEKADEPMEH).

The protein belongs to the peptidase T1A family. In terms of assembly, the 26S proteasome consists of a 20S proteasome core and two 19S regulatory subunits. The 20S proteasome core is a barrel-shaped complex made of 28 subunits that are arranged in four stacked rings. The two outer rings are each formed by seven alpha subunits, and the two inner rings are formed by seven beta subunits. The proteolytic activity is exerted by three beta-subunits PSMB5, PSMB6 and PSMB7. Interacts with NOTCH3. Interacts with ZFAND1. Proteolytically cleaved from a C-terminal extension in the course of the conversion of the proteasome from its latent form into its active form. Ubiquitous.

The protein localises to the cytoplasm. It localises to the nucleus. Component of the 20S core proteasome complex involved in the proteolytic degradation of most intracellular proteins. This complex plays numerous essential roles within the cell by associating with different regulatory particles. Associated with two 19S regulatory particles, forms the 26S proteasome and thus participates in the ATP-dependent degradation of ubiquitinated proteins. The 26S proteasome plays a key role in the maintenance of protein homeostasis by removing misfolded or damaged proteins that could impair cellular functions, and by removing proteins whose functions are no longer required. Associated with the PA200 or PA28, the 20S proteasome mediates ubiquitin-independent protein degradation. This type of proteolysis is required in several pathways including spermatogenesis (20S-PA200 complex) or generation of a subset of MHC class I-presented antigenic peptides (20S-PA28 complex). The protein is Proteasome subunit alpha type-1 (Psma1) of Rattus norvegicus (Rat).